We begin with the raw amino-acid sequence, 317 residues long: Ribosomal protein L11 methyltransferase (317 aa).

Thr158, Gly179, Asp201, and Asn244 together coordinate S-adenosyl-L-methionine.

Belongs to the methyltransferase superfamily. PrmA family.

It is found in the cytoplasm. It carries out the reaction L-lysyl-[protein] + 3 S-adenosyl-L-methionine = N(6),N(6),N(6)-trimethyl-L-lysyl-[protein] + 3 S-adenosyl-L-homocysteine + 3 H(+). Methylates ribosomal protein L11. This Streptococcus pyogenes serotype M6 (strain ATCC BAA-946 / MGAS10394) protein is Ribosomal protein L11 methyltransferase.